Here is a 439-residue protein sequence, read N- to C-terminus: SET domain-containing protein 4 (439 aa).

Residues 1–19 (MQRRRGRTERARKRRRRSS) are compositionally biased toward basic residues. The disordered stretch occupies residues 1–25 (MQRRRGRTERARKRRRRSSGSRAVN). Positions 47–272 (TDLVPASFPG…KHQEVFICYG (226 aa)) constitute an SET domain. An S-adenosyl-L-methionine-binding site is contributed by Y271.

The protein belongs to the class V-like SAM-binding methyltransferase superfamily. SETD4 family. In terms of assembly, forms a ternary complex with TBK1 and ZNF268; the interaction with TBK1 is ZNF268-dependent and leads to TBK1 monomethylation. As to expression, expressed in the forebrain subventricular zone, in quiescent neural stem cells.

The protein resides in the cytoplasm. Its subcellular location is the cytosol. It localises to the nucleus. It catalyses the reaction L-lysyl(4)-[histone H3] + S-adenosyl-L-methionine = N(6)-methyl-L-lysyl(4)-[histone H3] + S-adenosyl-L-homocysteine + H(+). It carries out the reaction N(6)-methyl-L-lysyl(4)-[histone H3] + S-adenosyl-L-methionine = N(6),N(6)-dimethyl-L-lysyl(4)-[histone H3] + S-adenosyl-L-homocysteine + H(+). The enzyme catalyses L-lysyl(20)-[histone H4] + S-adenosyl-L-methionine = N(6)-methyl-L-lysyl(20)-[histone H4] + S-adenosyl-L-homocysteine + H(+). The catalysed reaction is N(6)-methyl-L-lysyl(20)-[histone H4] + S-adenosyl-L-methionine = N(6),N(6)-dimethyl-L-lysyl(20)-[histone H4] + S-adenosyl-L-homocysteine + H(+). It catalyses the reaction N(6),N(6)-dimethyl-L-lysyl(20)-[histone H4] + S-adenosyl-L-methionine = N(6),N(6),N(6)-trimethyl-L-lysyl(20)-[histone H4] + S-adenosyl-L-homocysteine + H(+). It carries out the reaction L-lysyl-[protein] + S-adenosyl-L-methionine = N(6)-methyl-L-lysyl-[protein] + S-adenosyl-L-homocysteine + H(+). Functionally, protein-lysine N-methyltransferase that methylates both histones and non-histone proteins. Via its catalytic activity, regulates many processes, including cell proliferation, cell differentiation, inflammatory response and apoptosis. Regulates the inflammatory response by mediating mono- and dimethylation of 'Lys-4' of histone H3 (H3K4me1 and H3K4me2, respectively), leading to activate the transcription of pro-inflammatory cytokines IL6 and TNF-alpha. Also involved in the regulation of stem cell quiescence by catalyzing the trimethylation of 'Lys-20' of histone H4 (H4K20me3), thereby promoting heterochromatin formation. In the brain, epigenetically controls quiescence of neural stem cells for sustaining a protected neural stem cell population and maintaining a stem cell reservoir for neurogenesis. Involved in proliferation, migration, paracrine and myogenic differentiation of bone marrow mesenchymal stem cells (BMSCs). Through the catalysis of XRCC5/Ku70 trimethylation, regulates BAX-mediated apoptosis. SETD4-catalyzed XRCC5 methylation results in XRCC5 translocation to the cytoplasm, where it interacts with BAX, sequestering it from the mitochondria, hence preventing BAX-mediated apoptosis. The protein is SET domain-containing protein 4 of Mus musculus (Mouse).